The following is a 392-amino-acid chain: UDP-N-acetylglucosamine--N-acetylmuramyl-(pentapeptide) pyrophosphoryl-undecaprenol N-acetylglucosamine transferase (392 aa).

UDP-N-acetyl-alpha-D-glucosamine-binding positions include 14–16 (TGG), Asn124, Arg167, Ser195, Ile251, and Gln296.

It belongs to the glycosyltransferase 28 family. MurG subfamily.

It is found in the cell inner membrane. The catalysed reaction is di-trans,octa-cis-undecaprenyl diphospho-N-acetyl-alpha-D-muramoyl-L-alanyl-D-glutamyl-meso-2,6-diaminopimeloyl-D-alanyl-D-alanine + UDP-N-acetyl-alpha-D-glucosamine = di-trans,octa-cis-undecaprenyl diphospho-[N-acetyl-alpha-D-glucosaminyl-(1-&gt;4)]-N-acetyl-alpha-D-muramoyl-L-alanyl-D-glutamyl-meso-2,6-diaminopimeloyl-D-alanyl-D-alanine + UDP + H(+). It participates in cell wall biogenesis; peptidoglycan biosynthesis. Its function is as follows. Cell wall formation. Catalyzes the transfer of a GlcNAc subunit on undecaprenyl-pyrophosphoryl-MurNAc-pentapeptide (lipid intermediate I) to form undecaprenyl-pyrophosphoryl-MurNAc-(pentapeptide)GlcNAc (lipid intermediate II). The chain is UDP-N-acetylglucosamine--N-acetylmuramyl-(pentapeptide) pyrophosphoryl-undecaprenol N-acetylglucosamine transferase from Sphingopyxis alaskensis (strain DSM 13593 / LMG 18877 / RB2256) (Sphingomonas alaskensis).